We begin with the raw amino-acid sequence, 271 residues long: Ribosomal RNA small subunit methyltransferase A (271 aa).

6 residues coordinate S-adenosyl-L-methionine: asparagine 19, leucine 21, glycine 46, glutamate 67, aspartate 92, and asparagine 114.

It belongs to the class I-like SAM-binding methyltransferase superfamily. rRNA adenine N(6)-methyltransferase family. RsmA subfamily.

The protein resides in the cytoplasm. The catalysed reaction is adenosine(1518)/adenosine(1519) in 16S rRNA + 4 S-adenosyl-L-methionine = N(6)-dimethyladenosine(1518)/N(6)-dimethyladenosine(1519) in 16S rRNA + 4 S-adenosyl-L-homocysteine + 4 H(+). Specifically dimethylates two adjacent adenosines (A1518 and A1519) in the loop of a conserved hairpin near the 3'-end of 16S rRNA in the 30S particle. May play a critical role in biogenesis of 30S subunits. In Aeromonas hydrophila subsp. hydrophila (strain ATCC 7966 / DSM 30187 / BCRC 13018 / CCUG 14551 / JCM 1027 / KCTC 2358 / NCIMB 9240 / NCTC 8049), this protein is Ribosomal RNA small subunit methyltransferase A.